A 249-amino-acid chain; its full sequence is MSSIGTGYDLSVTTFSPDGRVFQIEYAAKAVDNSGTVVGIKCKDGIVMGVEKLIASKMMLPGSNRRIHSVHRHAGMAVAGLAADGRQIVARAKSEARSYESVYGDAVPVKELSERVASYVHLCTLYWWLRPFGCGVILGGYDRDGPQLYMIEPSGISYRYFGAAIGKGKQAAKTEIEKLNLSEMTCKEGVIEVAKIIYKLHDEAKDKAFELEMSWICEESKREHQKVPDDLLEEAKTAAKTALEEMDAD.

Ser2 carries the N-acetylserine modification. O-acetylserine occurs at positions 214 and 220. Lys221 participates in a covalent cross-link: Glycyl lysine isopeptide (Lys-Gly) (interchain with G-Cter in ubiquitin).

This sequence belongs to the peptidase T1A family. In terms of assembly, component of the 20S core complex of the 26S proteasome. The 26S proteasome is composed of a core protease (CP), known as the 20S proteasome, capped at one or both ends by the 19S regulatory particle (RP/PA700). The 20S proteasome core is composed of 28 subunits that are arranged in four stacked rings, resulting in a barrel-shaped structure. The two end rings are each formed by seven alpha subunits, and the two central rings are each formed by seven beta subunits. The catalytic chamber with the active sites is on the inside of the barrel. In terms of tissue distribution, ubiquitous low levels.

The protein resides in the cytoplasm. Its subcellular location is the nucleus. The proteasome is a multicatalytic proteinase complex which is characterized by its ability to cleave peptides with Arg, Phe, Tyr, Leu, and Glu adjacent to the leaving group at neutral or slightly basic pH. The proteasome has an ATP-dependent proteolytic activity. This is Proteasome subunit alpha type-3 (PAG1) from Arabidopsis thaliana (Mouse-ear cress).